A 213-amino-acid chain; its full sequence is Phosphoribosyl-dephospho-CoA transferase (213 aa).

Active-site residues include aspartate 135 and aspartate 137.

The protein belongs to the MdcG family.

The catalysed reaction is apo-[malonate decarboxylase ACP] + 2'-(5''-triphospho-alpha-D-ribosyl)-3'-dephospho-CoA = holo-[malonate decarboxylase ACP] + diphosphate. In terms of biological role, transfers 2'-(5-triphosphoribosyl)-3'-dephosphocoenzyme-A to the apo-[acyl-carrier-protein] of the malonate decarboxylase to yield holo-[acyl-carrier-protein]. The polypeptide is Phosphoribosyl-dephospho-CoA transferase (Xanthomonas euvesicatoria pv. vesicatoria (strain 85-10) (Xanthomonas campestris pv. vesicatoria)).